A 141-amino-acid polypeptide reads, in one-letter code: Small ribosomal subunit protein uS8c (141 aa).

The protein belongs to the universal ribosomal protein uS8 family. Part of the 30S ribosomal subunit.

The protein localises to the plastid. Its subcellular location is the chloroplast. In terms of biological role, one of the primary rRNA binding proteins, it binds directly to 16S rRNA central domain where it helps coordinate assembly of the platform of the 30S subunit. The protein is Small ribosomal subunit protein uS8c (rps8) of Pleurastrum terricola (Filamentous green alga).